The following is a 245-amino-acid chain: tRNA (guanine-N(1)-)-methyltransferase (245 aa).

Glycine 114 contributes to the S-adenosyl-L-methionine binding site.

This sequence belongs to the RNA methyltransferase TrmD family. Homodimer.

The protein localises to the cytoplasm. It catalyses the reaction guanosine(37) in tRNA + S-adenosyl-L-methionine = N(1)-methylguanosine(37) in tRNA + S-adenosyl-L-homocysteine + H(+). Specifically methylates guanosine-37 in various tRNAs. The chain is tRNA (guanine-N(1)-)-methyltransferase from Sphingopyxis alaskensis (strain DSM 13593 / LMG 18877 / RB2256) (Sphingomonas alaskensis).